A 2126-amino-acid polypeptide reads, in one-letter code: Serine/threonine-protein kinase WNK1 (2126 aa).

2 disordered regions span residues 1–80 (MSDG…FFRR) and 93–202 (LPGL…QQQD). At Ser-17 the chain carries Phosphoserine. Basic and acidic residues predominate over residues 48 to 64 (RTEEYRRRRHTMDKDSR). Thr-58 is modified (phosphothreonine). 2 stretches are compositionally biased toward low complexity: residues 101–111 (PQPSVPAVVPQ) and 127–141 (VASQ…AASP). Phosphoserine is present on residues Ser-165 and Ser-172. Residues 221 to 479 (LKFDIEIGRG…IKDLLNHAFF (259 aa)) form the Protein kinase domain. Ser-231 serves as a coordination point for ATP. Residues Phe-283 and Leu-299 each coordinate chloride. ATP is bound by residues 301–304 (TELM) and Lys-351. Asp-368 acts as the Proton acceptor in catalysis. Leu-369 and Leu-371 together coordinate chloride. A phosphoserine; by autocatalysis mark is found at Ser-378 and Ser-382. The tract at residues 488–555 (ELAEEDDGEK…VCEGDHKTMA (68 aa)) is autoinhibitory domain. Over residues 573–588 (QLVREEQEKRKQEESS) the composition is skewed to basic and acidic residues. The disordered stretch occupies residues 573–865 (QLVREEQEKR…SRHEKTSRPK (293 aa)). Positions 593–614 (NEQQASVSQAGIQPLSVASTGI) are enriched in polar residues. Over residues 615–626 (PTAPTTSASVST) the composition is skewed to low complexity. Residues 629 to 639 (EPEEPEADQHQ) are interaction with KLHL3. Polar residues-rich tracts occupy residues 638–682 (HQQL…GSQH), 695–705 (TVSSIQAQSQP), and 713–733 (SMAQ…VLSS). Residues 734 to 746 (QPVQHPQQQGIQP) are compositionally biased toward low complexity. The segment covering 750-789 (PQQAVQYSLPQAASSSEGTVQPVSQPQVSAGTQSSTQGVS) has biased composition (polar residues). Over residues 793–823 (PPEQTPITQSQPTQPVPLVSSVDSAHSDVAS) the composition is skewed to low complexity. A compositionally biased stretch (polar residues) spans 826–836 (SDGNENAPSSS). Residues 844-865 (TKRHYRKSVRSRSRHEKTSRPK) are compositionally biased toward basic residues. Residues 1003-1006 (RFIV) carry the RFXV motif 1 motif. A Phosphoserine modification is found at Ser-1007. 2 disordered regions span residues 1474 to 1507 (GQVS…LTKT) and 1557 to 1595 (IPVT…ASSS). A compositionally biased stretch (low complexity) spans 1477–1496 (STPGTHASAPASTATGAKPG). Residues 1567–1583 (STMSSTAVTEAGSQPQK) are compositionally biased toward polar residues. The RFXV motif 2 signature appears at 1604-1607 (RFQV). The tract at residues 1610–1695 (TMDDAQKERK…TKVGRFQVTT (86 aa)) is disordered. The segment covering 1613–1629 (DAQKERKNRSEDTKSVH) has biased composition (basic and acidic residues). The span at 1632 to 1650 (SSTSESSVLSSSSPESTLV) shows a compositional bias: low complexity. Short sequence motifs (RFXV motif) lie at residues 1690-1693 (RFQV) and 1702-1705 (RFSV). Basic and acidic residues predominate over residues 1709–1719 (EDKVTELKKEG). Disordered regions lie at residues 1709–1783 (EDKV…LCSK), 1856–1940 (VIIP…NLYS), and 1952–1990 (SLSA…KGTF). Ser-1723 carries the post-translational modification Phosphoserine. Basic and acidic residues predominate over residues 1738 to 1747 (PKKEKPELAE). Residues Ser-1755, Ser-1756, Ser-1771, Ser-1773, Ser-1776, and Ser-1865 each carry the phosphoserine modification. Residues 1866–1878 (GRRRRPTKSKGSK) show a composition bias toward basic residues. A compositionally biased stretch (low complexity) spans 1879–1889 (SSRSSSLGNKS). The span at 1890 to 1940 (PQLSGNLSGQSGTSVLNPQQTLHPPGNTPETGHNQLLQPLKPSPSSDNLYS) shows a compositional bias: polar residues. The segment covering 1957-1981 (GQGTSSTNTVGGTVSSQAAQAQPPA) has biased composition (low complexity). The segment at 1985 to 2005 (SRKGTFTDDLHKLVDNWARDA) is amphipathic alpha-helix. A phosphoserine mark is found at Ser-2014 and Ser-2030. The segment at 2076-2097 (PFGTQWSGTGGPAPQPLGQFQP) is disordered. Ser-2114 and Ser-2116 each carry phosphoserine.

This sequence belongs to the protein kinase superfamily. Ser/Thr protein kinase family. WNK subfamily. In terms of assembly, interacts with WNK3. Interacts with WNK4; inhibiting the activity of WNK4. Interacts with SGK1; promoting its activation. Associates with the mTORC2 complex. Interacts with UVRAG. Interacts (via amphipathic alpha-helix region) with EMC2; promoting the ER membrane protein complex assembly. As to quaternary structure, interacts with isoform 1; inhibiting isoform 1 activity. Requires Mg(2+) as cofactor. Post-translationally, autophosphorylated at Ser-378 and Ser-382, promoting its activity. Autophosphorylation at Ser-382 is inhibited by intracellular calcium. Phosphorylation at Thr-58 increases ability to activate SGK1. Ubiquitinated by the BCR(KLHL3) complex, leading to its degradation. Also ubiquitinated by the BCR(KLHL2) complex. In terms of processing, may be O-glycosylated.

It is found in the cytoplasm. It localises to the nucleus. The protein resides in the cytoskeleton. Its subcellular location is the spindle. It carries out the reaction L-seryl-[protein] + ATP = O-phospho-L-seryl-[protein] + ADP + H(+). The catalysed reaction is L-threonyl-[protein] + ATP = O-phospho-L-threonyl-[protein] + ADP + H(+). With respect to regulation, activated in response to hyperosmotic stress: cell shrinkage promotes formation of a membraneless compartment that concentrates WNK1 with its substrates, OXSR1/OSR1 and STK39/SPAK. Activation requires autophosphorylation of Ser-382 and, to a lower extent, Ser-378. Autophosphorylation and subsequent activation is inhibited by increases in intracellular ionic strength: Cl(-) potently inhibits WNK1 kinase activity via direct binding. Also inhibited by K(+) ions. Inhibited by Compound 12 ((5-Chloro-2-(2-((methyl-d3)amino)thiazol-4-yl)- pyridin-4-yl)(4-(4-chlorobenzyl)piperazin-1-yl)methanone). In terms of biological role, serine/threonine-protein kinase component of the WNK1-SPAK/OSR1 kinase cascade, which acts as a key regulator of blood pressure and regulatory volume increase by promoting ion influx. WNK1 mediates regulatory volume increase in response to hyperosmotic stress by acting as a molecular crowding sensor, which senses cell shrinkage and mediates formation of a membraneless compartment by undergoing liquid-liquid phase separation. The membraneless compartment concentrates WNK1 with its substrates, OXSR1/OSR1 and STK39/SPAK, promoting WNK1-dependent phosphorylation and activation of downstream kinases OXSR1/OSR1 and STK39/SPAK. Following activation, OXSR1/OSR1 and STK39/SPAK catalyze phosphorylation of ion cotransporters SLC12A1/NKCC2, SLC12A2/NKCC1, SLC12A5/KCC2 and SLC12A6/KCC3, regulating their activity. Phosphorylation of Na-K-Cl cotransporters SLC12A2/NKCC1 and SLC12A2/NKCC1 promote their activation and ion influx; simultaneously, phosphorylation of K-Cl cotransporters SLC12A5/KCC2 and SLC12A6/KCC3 inhibit their activity, blocking ion efflux. Also acts as a regulator of angiogenesis in endothelial cells. Also acts independently of the WNK1-SPAK/OSR1 kinase cascade by catalyzing phosphorylation of other substrates, such as SYT2, PCF11 and NEDD4L. Mediates phosphorylation of SYT2, regulating SYT2 association with phospholipids and membrane-binding. Regulates mRNA export in the nucleus by mediating phosphorylation of PCF11, thereby decreasing the association between PCF11 and POLR2A/RNA polymerase II and promoting mRNA export to the cytoplasm. Acts as a negative regulator of autophagy. Required for the abscission step during mitosis, independently of the WNK1-SPAK/OSR1 kinase cascade. WNK1 may also play a role in actin cytoskeletal reorganization. Also acts as a scaffold protein independently of its protein kinase activity: negatively regulates cell membrane localization of various transporters and channels, such as SLC4A4, SLC26A6, SLC26A9, TRPV4 and CFTR. Involved in the regulation of epithelial Na(+) channel (ENaC) by promoting activation of SGK1 in a kinase-independent manner. Probably activates SGK1 by acting as a scaffold protein that promotes the recruitment of SGK1 to the mTORC2 complex in response to chloride, leading to mTORC2-dependent phosphorylation and activation of SGK1. Acts as an assembly factor for the ER membrane protein complex independently of its protein kinase activity: associates with EMC2 in the cytoplasm via its amphipathic alpha-helix, and prevents EMC2 ubiquitination and subsequent degradation, thereby promoting EMC2 stabilization. Its function is as follows. Kinase-defective isoform specifically expressed in kidney, which acts as a dominant-negative regulator of the longer isoform 1. Does not directly inhibit WNK4 and has no direct effect on sodium and chloride ion transport. Down-regulates sodium-chloride cotransporter activity indirectly by inhibiting isoform 1, it associates with isoform 1 and attenuates its kinase activity. In kidney, may play an important role regulating sodium and potassium balance. Kinase-defective isoform produced by alternative promoter usage and alternative splicing. The sequence is that of Serine/threonine-protein kinase WNK1 from Rattus norvegicus (Rat).